The following is a 300-amino-acid chain: Ribonuclease HIII (300 aa).

An RNase H type-2 domain is found at 83–300; sequence IPIIGSDEVG…THKAQALLTK (218 aa). Residues D89, E90, and D194 each coordinate a divalent metal cation.

Belongs to the RNase HII family. RnhC subfamily. Mn(2+) is required as a cofactor. The cofactor is Mg(2+).

The protein localises to the cytoplasm. It carries out the reaction Endonucleolytic cleavage to 5'-phosphomonoester.. Its function is as follows. Endonuclease that specifically degrades the RNA of RNA-DNA hybrids. In Streptococcus pyogenes serotype M3 (strain ATCC BAA-595 / MGAS315), this protein is Ribonuclease HIII.